A 246-amino-acid polypeptide reads, in one-letter code: Phosphonates import ATP-binding protein PhnC (246 aa).

The ABC transporter domain maps to 2-246 (IKFENVSKVY…ILDEVYRKEG (245 aa)). Residue 35 to 42 (GTSGAGKS) coordinates ATP.

The protein belongs to the ABC transporter superfamily. Phosphonates importer (TC 3.A.1.9.1) family. As to quaternary structure, the complex is composed of two ATP-binding proteins (PhnC), two transmembrane proteins (PhnE) and a solute-binding protein (PhnD).

It localises to the cell membrane. The enzyme catalyses phosphonate(out) + ATP + H2O = phosphonate(in) + ADP + phosphate + H(+). In terms of biological role, part of the ABC transporter complex PhnCDE involved in phosphonates import. Responsible for energy coupling to the transport system. The sequence is that of Phosphonates import ATP-binding protein PhnC from Lactococcus lactis subsp. cremoris (strain SK11).